Here is an 896-residue protein sequence, read N- to C-terminus: Glutamate receptor 2.4 (896 aa).

The first 24 residues, 1–24, serve as a signal peptide directing secretion; that stretch reads MKRHLNDVVLVFLVFIFGVKLGKG. The Extracellular portion of the chain corresponds to 25-565; it reads QNTTIQVINV…SSLIFFKPLT (541 aa). N-linked (GlcNAc...) asparagine glycosylation is found at asparagine 26, asparagine 46, asparagine 53, asparagine 204, asparagine 267, asparagine 331, asparagine 341, and asparagine 527. The chain crosses the membrane as a helical span at residues 566-586; sequence PGLWGMTLGSFFVVGFVVWIL. Topologically, residues 587–595 are cytoplasmic; sequence EHRVNSEFT. The helical transmembrane segment at 596–616 threads the bilayer; sequence GPPQYQISTMFWFAFSIMVFA. Over 617-620 the chain is Cytoplasmic; sequence PRER. The chain crosses the membrane as a helical span at residues 621–641; sequence VMSFTARVVVITWYFIVLVLT. Over 642–815 the chain is Extracellular; the sequence is QSYTASLSSL…VSFRKLSLDS (174 aa). A helical membrane pass occupies residues 816–836; the sequence is FLLLFVAAATVCTLALLKFVI. Residues 837-896 are Cytoplasmic-facing; that stretch reads CFLIQNRIILNDEFYRGKRMKEMWLKFMESDGESYISRVRSTCPQVLIQPREEDIDPING.

The protein belongs to the glutamate-gated ion channel (TC 1.A.10.1) family. May form heteromers. In terms of tissue distribution, expressed predominantly in roots.

It localises to the membrane. Glutamate-gated receptor that probably acts as a non-selective cation channel. May be involved in light-signal transduction and calcium homeostasis via the regulation of calcium influx into cells. This chain is Glutamate receptor 2.4 (GLR2.4), found in Arabidopsis thaliana (Mouse-ear cress).